The chain runs to 331 residues: tRNA-cytidine(32) 2-sulfurtransferase (331 aa).

Residues 1–31 (MNAPHMNDTTADAATLDATAAPAGRPALTRR) are disordered. A compositionally biased stretch (low complexity) spans 8-23 (DTTADAATLDATAAPA). Residues 71–76 (SGGKDS) carry the PP-loop motif motif. [4Fe-4S] cluster contacts are provided by cysteine 146, cysteine 149, and cysteine 237.

It belongs to the TtcA family. As to quaternary structure, homodimer. Requires Mg(2+) as cofactor. [4Fe-4S] cluster serves as cofactor.

It localises to the cytoplasm. It carries out the reaction cytidine(32) in tRNA + S-sulfanyl-L-cysteinyl-[cysteine desulfurase] + AH2 + ATP = 2-thiocytidine(32) in tRNA + L-cysteinyl-[cysteine desulfurase] + A + AMP + diphosphate + H(+). It participates in tRNA modification. Its function is as follows. Catalyzes the ATP-dependent 2-thiolation of cytidine in position 32 of tRNA, to form 2-thiocytidine (s(2)C32). The sulfur atoms are provided by the cysteine/cysteine desulfurase (IscS) system. The sequence is that of tRNA-cytidine(32) 2-sulfurtransferase from Burkholderia lata (strain ATCC 17760 / DSM 23089 / LMG 22485 / NCIMB 9086 / R18194 / 383).